Reading from the N-terminus, the 201-residue chain is Endoribonuclease YbeY (201 aa).

Zn(2+) is bound by residues His-156, His-160, and His-166.

Belongs to the endoribonuclease YbeY family. Requires Zn(2+) as cofactor.

The protein localises to the cytoplasm. Single strand-specific metallo-endoribonuclease involved in late-stage 70S ribosome quality control and in maturation of the 3' terminus of the 16S rRNA. This chain is Endoribonuclease YbeY, found in Cupriavidus pinatubonensis (strain JMP 134 / LMG 1197) (Cupriavidus necator (strain JMP 134)).